Here is a 150-residue protein sequence, read N- to C-terminus: Small ribosomal subunit protein uS7cz/uS7cy (150 aa).

This sequence belongs to the universal ribosomal protein uS7 family. In terms of assembly, part of the 30S ribosomal subunit.

It is found in the plastid. The protein localises to the chloroplast. Functionally, one of the primary rRNA binding proteins, it binds directly to 16S rRNA where it nucleates assembly of the head domain of the 30S subunit. The protein is Small ribosomal subunit protein uS7cz/uS7cy (rps7-A) of Adiantum capillus-veneris (Maidenhair fern).